We begin with the raw amino-acid sequence, 220 residues long: Competence protein ComFC (220 aa).

Belongs to the ComF/GntX family. In terms of assembly, monomer and dimer in solution. Interacts with ComFA and DprA; ComFA-ComFC form rings about 150 Angstroms in diameter with apparent 6-fold symmetry.

Involved in transformation (genetic competence for DNA uptake). This is Competence protein ComFC from Streptococcus pneumoniae (strain ATCC BAA-255 / R6).